Here is a 291-residue protein sequence, read N- to C-terminus: 4-hydroxy-tetrahydrodipicolinate synthase (291 aa).

Residue Thr45 coordinates pyruvate. Tyr131 (proton donor/acceptor) is an active-site residue. The active-site Schiff-base intermediate with substrate is Lys159. Residue Ile202 coordinates pyruvate.

The protein belongs to the DapA family. As to quaternary structure, homotetramer; dimer of dimers.

The protein resides in the cytoplasm. The catalysed reaction is L-aspartate 4-semialdehyde + pyruvate = (2S,4S)-4-hydroxy-2,3,4,5-tetrahydrodipicolinate + H2O + H(+). Its pathway is amino-acid biosynthesis; L-lysine biosynthesis via DAP pathway; (S)-tetrahydrodipicolinate from L-aspartate: step 3/4. Functionally, catalyzes the condensation of (S)-aspartate-beta-semialdehyde [(S)-ASA] and pyruvate to 4-hydroxy-tetrahydrodipicolinate (HTPA). The sequence is that of 4-hydroxy-tetrahydrodipicolinate synthase from Methanosarcina mazei (strain ATCC BAA-159 / DSM 3647 / Goe1 / Go1 / JCM 11833 / OCM 88) (Methanosarcina frisia).